A 122-amino-acid polypeptide reads, in one-letter code: Conotoxin flf14.2 (122 aa).

The N-terminal stretch at 1–22 is a signal peptide; it reads MGFRVLVLIVMVTTSALPFTFS. Positions 23–96 are excised as a propeptide; it reads EESGRSPFRP…AESPVGQKRW (74 aa). A disordered region spans residues 53 to 91; that stretch reads RADGQPSDMRQPEMRRPEMRRPEVRRPEVRQPEFAESPV. A compositionally biased stretch (basic and acidic residues) spans 62 to 85; sequence RQPEMRRPEMRRPEVRRPEVRQPE. Intrachain disulfides connect Cys101-Cys121 and Cys105-Cys117.

Belongs to the conotoxin R superfamily. Expressed by the venom duct.

The protein localises to the secreted. This Conus anabathrum floridanus (Florida cone) protein is Conotoxin flf14.2.